We begin with the raw amino-acid sequence, 101 residues long: Osteocalcin (101 aa).

Positions 1 to 19 (MKLAILTVLLLGAAVLCLG) are cleaved as a signal peptide. Residues 20–52 (SKDADHSNSVGESHSSEAFISRQESASFARLKR) constitute a propeptide that is removed on maturation. The 47-residue stretch at 53 to 99 (SYGNNVGQGAAVGSPLESQREVCELNPDCDELADHIGFQEAYRRFYG) folds into the Gla domain. Positions 69, 73, 76, and 82 each coordinate Ca(2+). Residues Glu-69, Glu-73, and Glu-76 each carry the 4-carboxyglutamate modification. A disulfide bond links Cys-75 and Cys-81.

Belongs to the osteocalcin/matrix Gla protein family. Gamma-carboxyglutamate residues are formed by vitamin K dependent carboxylation by GGCX. These residues are essential for the binding of calcium.

The protein resides in the secreted. Functionally, the carboxylated form is one of the main organic components of the bone matrix, which constitutes 1-2% of the total bone protein. The carboxylated form binds strongly to apatite and calcium. The protein is Osteocalcin (bglap) of Xenopus laevis (African clawed frog).